Consider the following 244-residue polypeptide: NAD(P)H-quinone oxidoreductase subunit K (244 aa).

Residues Cys-60, Cys-61, Cys-125, and Cys-156 each contribute to the [4Fe-4S] cluster site.

This sequence belongs to the complex I 20 kDa subunit family. As to quaternary structure, NDH-1 can be composed of about 15 different subunits; different subcomplexes with different compositions have been identified which probably have different functions. [4Fe-4S] cluster is required as a cofactor.

It localises to the cellular thylakoid membrane. The catalysed reaction is a plastoquinone + NADH + (n+1) H(+)(in) = a plastoquinol + NAD(+) + n H(+)(out). The enzyme catalyses a plastoquinone + NADPH + (n+1) H(+)(in) = a plastoquinol + NADP(+) + n H(+)(out). Functionally, NDH-1 shuttles electrons from an unknown electron donor, via FMN and iron-sulfur (Fe-S) centers, to quinones in the respiratory and/or the photosynthetic chain. The immediate electron acceptor for the enzyme in this species is believed to be plastoquinone. Couples the redox reaction to proton translocation, and thus conserves the redox energy in a proton gradient. Cyanobacterial NDH-1 also plays a role in inorganic carbon-concentration. This Synechococcus sp. (strain CC9902) protein is NAD(P)H-quinone oxidoreductase subunit K.